A 353-amino-acid polypeptide reads, in one-letter code: Mitochondrial distribution and morphology protein 12 (353 aa).

One can recognise an SMP-LTD domain in the interval Met1–Asn330. Acidic residues-rich tracts occupy residues Asp64–Glu75, Thr84–Gly103, and Asn330–Pro342. 2 disordered regions span residues Asp64–Arg140 and Asn330–Ser353.

Belongs to the MDM12 family. Component of the ER-mitochondria encounter structure (ERMES) or MDM complex, composed of MMM1, MDM10, MDM12 and MDM34. An MMM1 homodimer associates with one molecule of MDM12 on each side in a pairwise head-to-tail manner, and the SMP-LTD domains of MMM1 and MDM12 generate a continuous hydrophobic tunnel for phospholipid trafficking.

It localises to the mitochondrion outer membrane. The protein resides in the endoplasmic reticulum membrane. Its function is as follows. Component of the ERMES/MDM complex, which serves as a molecular tether to connect the endoplasmic reticulum (ER) and mitochondria. Components of this complex are involved in the control of mitochondrial shape and protein biogenesis, and function in nonvesicular lipid trafficking between the ER and mitochondria. MDM12 is required for the interaction of the ER-resident membrane protein MMM1 and the outer mitochondrial membrane-resident beta-barrel protein MDM10. The MDM12-MMM1 subcomplex functions in the major beta-barrel assembly pathway that is responsible for biogenesis of all mitochondrial outer membrane beta-barrel proteins, and acts in a late step after the SAM complex. The MDM10-MDM12-MMM1 subcomplex further acts in the TOM40-specific pathway after the action of the MDM12-MMM1 complex. Essential for establishing and maintaining the structure of mitochondria and maintenance of mtDNA nucleoids. This chain is Mitochondrial distribution and morphology protein 12, found in Candida tropicalis (strain ATCC MYA-3404 / T1) (Yeast).